The chain runs to 539 residues: 3-methylmercaptopropionyl-CoA ligase (539 aa).

Mg(2+) is bound at residue Thr-185. Positions 231, 303, 324, 325, and 329 each coordinate ATP. Residue Glu-330 coordinates Mg(2+). The ATP site is built by Gln-359, Asp-417, Arg-432, and Lys-523.

It belongs to the ATP-dependent AMP-binding enzyme family. As to quaternary structure, homodimer. It depends on Mg(2+) as a cofactor.

The enzyme catalyses 3-(methylsulfanyl)propanoate + ATP + CoA = 3-(methylsulfanyl)propanoyl-CoA + AMP + diphosphate. With respect to regulation, ADP acts as a competitive inhibitor and inhibits the ligase activity. In terms of biological role, involved in the assimilation of dimethylsulphoniopropionate (DMSP), an important compound in the fixation of carbon in marine phytoplankton. Catalyzes the ATP-dependent ligation of methylmercaptopropionate (MMPA) and CoA to yield methylmercaptopropionate-CoA (MMPA-CoA). This chain is 3-methylmercaptopropionyl-CoA ligase, found in Ruegeria lacuscaerulensis (strain DSM 11314 / KCTC 2953 / ITI-1157) (Silicibacter lacuscaerulensis).